Here is a 197-residue protein sequence, read N- to C-terminus: Phosphoheptose isomerase (197 aa).

Residues 36–197 (MVNALLNEGK…IDSQLFGSEE (162 aa)) enclose the SIS domain. 51 to 53 (NGG) provides a ligand contact to substrate. Zn(2+) is bound by residues H60 and E64. Substrate contacts are provided by residues E64, 93 to 94 (ND), 119 to 121 (STS), S124, and Q174. Zn(2+)-binding residues include Q174 and H182.

Belongs to the SIS family. GmhA subfamily. As to quaternary structure, homotetramer. Zn(2+) serves as cofactor.

It is found in the cytoplasm. It catalyses the reaction 2 D-sedoheptulose 7-phosphate = D-glycero-alpha-D-manno-heptose 7-phosphate + D-glycero-beta-D-manno-heptose 7-phosphate. It functions in the pathway carbohydrate biosynthesis; D-glycero-D-manno-heptose 7-phosphate biosynthesis; D-glycero-alpha-D-manno-heptose 7-phosphate and D-glycero-beta-D-manno-heptose 7-phosphate from sedoheptulose 7-phosphate: step 1/1. In terms of biological role, catalyzes the isomerization of sedoheptulose 7-phosphate in D-glycero-D-manno-heptose 7-phosphate. The polypeptide is Phosphoheptose isomerase (Pseudomonas fluorescens (strain Pf0-1)).